The sequence spans 143 residues: Small ribosomal subunit protein bS18m (143 aa).

It belongs to the bacterial ribosomal protein bS18 family. Component of the mitochondrial ribosome small subunit (28S) which comprises a 12S rRNA and about 30 distinct proteins.

It localises to the mitochondrion. The protein is Small ribosomal subunit protein bS18m (MRPS18C) of Bos taurus (Bovine).